We begin with the raw amino-acid sequence, 159 residues long: Putative transcriptional regulatory protein rrnAC0199 (159 aa).

The protein belongs to the Tfx family.

In terms of biological role, putative transcriptional regulator. The polypeptide is Putative transcriptional regulatory protein rrnAC0199 (Haloarcula marismortui (strain ATCC 43049 / DSM 3752 / JCM 8966 / VKM B-1809) (Halobacterium marismortui)).